The following is a 91-amino-acid chain: Large ribosomal subunit protein uL23c (91 aa).

This sequence belongs to the universal ribosomal protein uL23 family. Part of the 50S ribosomal subunit.

The protein resides in the plastid. The protein localises to the chloroplast. In terms of biological role, binds to 23S rRNA. The polypeptide is Large ribosomal subunit protein uL23c (rpl23) (Physcomitrium patens (Spreading-leaved earth moss)).